The chain runs to 70 residues: Large ribosomal subunit protein eL38 (70 aa).

The protein belongs to the eukaryotic ribosomal protein eL38 family.

This chain is Large ribosomal subunit protein eL38 (rpl-38), found in Ostertagia ostertagi (Brown stomach worm).